Consider the following 880-residue polypeptide: Protein transport protein SEC23 A (880 aa).

Residues 1–13 (MANLPKSSVNYPG) show a composition bias toward polar residues. Positions 1–95 (MANLPKSSVN…PPGPPVFNTP (95 aa)) are disordered. Pro residues predominate over residues 20–36 (PNRPSPQPDRTPVPHSP). The segment covering 57-70 (MSSPSMKSPSLLSP) has biased composition (low complexity). The Zn(2+) site is built by Cys-204, Cys-207, Cys-226, and Cys-229. Positions 204–229 (CLNCGAYSNPYSSILIGSGQWQCVIC) are zinc finger-like.

The protein belongs to the SEC23/SEC24 family. SEC24 subfamily. In terms of assembly, component of the coat protein complex II (COPII), composed of at least five proteins: the Sec23/24 complex, the Sec13/31 complex and Sar1. As to expression, mostly expressed in seedlings, roots, cotyledons, leaves, trichomes, leaf primordia and flowers, and, to a lower extent, in mature siliques.

It localises to the cytoplasmic vesicle. The protein resides in the COPII-coated vesicle membrane. The protein localises to the endoplasmic reticulum membrane. Its subcellular location is the membrane. Component of the coat protein complex II (COPII) which promotes the formation of transport vesicles from the endoplasmic reticulum (ER). The coat has two main functions, the physical deformation of the endoplasmic reticulum membrane into vesicles and the selection of cargo molecules. May contribute to COPII-coated vesicles formation and ER-Golgi vesicle transport. Together with SEC23D, essential for pollen wall development and exine patterning, probably by regulating endoplasmic reticulum (ER) export of lipids and proteins (e.g. sporopollenin) necessary for pollen wall formation. Also involved in plastid physiology in anther tapetal cells. This chain is Protein transport protein SEC23 A, found in Arabidopsis thaliana (Mouse-ear cress).